Reading from the N-terminus, the 334-residue chain is G-protein coupled receptor 12 (334 aa).

The Extracellular segment spans residues 1–48; that stretch reads MNEDPKVNLSGLPRDCIEAGTPENISAAVPSQGSVVESEPELVVNPWD. N-linked (GlcNAc...) asparagine glycosylation is found at asparagine 8 and asparagine 24. Residues 49–69 traverse the membrane as a helical segment; the sequence is IVLCSSGTLICCENAVVVLII. At 70-78 the chain is on the cytoplasmic side; sequence FHSPSLRAP. A helical membrane pass occupies residues 79-99; that stretch reads MFLLIGSLALADLLAGLGLII. At 100-113 the chain is on the extracellular side; that stretch reads NFVFAYLLQSEATK. Residues 114 to 134 form a helical membrane-spanning segment; that stretch reads LVTIGLIVASFSASVCSLLAI. The Cytoplasmic segment spans residues 135-158; sequence TVDRYLSLYYALTYHSERTVTFTY. Residues 159–179 form a helical membrane-spanning segment; that stretch reads VMLVMLWGTSTCLGLLPVMGW. The Extracellular segment spans residues 180 to 199; the sequence is NCLRDESTCSVVRPLTKNNA. A helical transmembrane segment spans residues 200-220; sequence AILSISFLFMFALMLQLYIQI. Over 221-252 the chain is Cytoplasmic; sequence CKIVMRHAHQIALQHHFLATSHYVTTRKGIST. A helical membrane pass occupies residues 253 to 273; it reads LALILGTFAACWMPFTLYSLI. Over 274 to 282 the chain is Extracellular; the sequence is ADYTYPSIY. A helical membrane pass occupies residues 283-303; sequence TYATLLPATYNSIINPVIYAF. At 304 to 334 the chain is on the cytoplasmic side; sequence RNQEIQKALCLICCGCIPNTLSQRARSPSDV. Cysteine 317 is lipidated: S-palmitoyl cysteine. 2 positions are modified to phosphoserine: serine 330 and serine 332.

The protein belongs to the G-protein coupled receptor 1 family. Expressed in the brain, pituitary gland and testis.

Its subcellular location is the cell membrane. Functionally, receptor with constitutive G(s) signaling activity that activates cyclic AMP. Promotes neurite outgrowth and blocks myelin inhibition in neurons. The protein is G-protein coupled receptor 12 (Gpr12) of Rattus norvegicus (Rat).